A 521-amino-acid polypeptide reads, in one-letter code: 7-deoxyloganic acid hydroxylase (521 aa).

The chain crosses the membrane as a helical span at residues 8–28 (IIFLVFVSLTLYWVYRILDWV). Residues Asn107 and Asn311 are each glycosylated (N-linked (GlcNAc...) asparagine). Cys469 serves as a coordination point for heme.

This sequence belongs to the cytochrome P450 family. Mostly present in actively growing aerial organs, including leaves, flower buds and stems, and, to a lower extent, in mature leaves, roots and opened flowers. Expressed in the leaf internal phloem-associated parenchyma (IPAP) inside the mesophyll.

The protein resides in the endoplasmic reticulum membrane. It carries out the reaction 7-deoxyloganate + reduced [NADPH--hemoprotein reductase] + O2 = loganate + oxidized [NADPH--hemoprotein reductase] + H2O + H(+). Its pathway is alkaloid biosynthesis. Functionally, component of the seco-iridoid and derivatives monoterpenoid indole alkaloids (MIAs, e.g. vincristine, quinine, and strychnine) biosynthesis pathway. Catalyzes the conversion of 7-deoxyloganic acid into loganic acid. Not active on 7-deoxyloganetic acid. In Catharanthus roseus (Madagascar periwinkle), this protein is 7-deoxyloganic acid hydroxylase.